Consider the following 162-residue polypeptide: UPF0178 protein Rsph17029_2512 (162 aa).

This sequence belongs to the UPF0178 family.

The chain is UPF0178 protein Rsph17029_2512 from Cereibacter sphaeroides (strain ATCC 17029 / ATH 2.4.9) (Rhodobacter sphaeroides).